The sequence spans 263 residues: Post-GPI attachment to proteins factor 2 (263 aa).

The next 6 membrane-spanning stretches (helical) occupy residues 16–36 (FVICIGGLPSSALLICVILSL), 69–89 (YIWRILIGLHIGPRLVVAIAF), 109–129 (FLCNLACFLNLLENFFLLALT), 143–163 (CFGGFAICSIIYMLLSTWLFN), 180–200 (YKILGAAIFVLCFFLGAYLYW), and 208–228 (PGIYTLFALVEYSAVLSNIFF).

Belongs to the PGAP2 family.

It localises to the golgi apparatus membrane. It is found in the endoplasmic reticulum membrane. Functionally, involved in the lipid remodeling steps of GPI-anchor maturation. Required for stable expression of GPI-anchored proteins at the cell surface. This chain is Post-GPI attachment to proteins factor 2, found in Caenorhabditis elegans.